The following is a 103-amino-acid chain: Pyrimidine/purine nucleoside phosphorylase (103 aa).

The protein belongs to the nucleoside phosphorylase PpnP family.

It catalyses the reaction a purine D-ribonucleoside + phosphate = a purine nucleobase + alpha-D-ribose 1-phosphate. The enzyme catalyses adenosine + phosphate = alpha-D-ribose 1-phosphate + adenine. The catalysed reaction is cytidine + phosphate = cytosine + alpha-D-ribose 1-phosphate. It carries out the reaction guanosine + phosphate = alpha-D-ribose 1-phosphate + guanine. It catalyses the reaction inosine + phosphate = alpha-D-ribose 1-phosphate + hypoxanthine. The enzyme catalyses thymidine + phosphate = 2-deoxy-alpha-D-ribose 1-phosphate + thymine. The catalysed reaction is uridine + phosphate = alpha-D-ribose 1-phosphate + uracil. It carries out the reaction xanthosine + phosphate = alpha-D-ribose 1-phosphate + xanthine. Its function is as follows. Catalyzes the phosphorolysis of diverse nucleosides, yielding D-ribose 1-phosphate and the respective free bases. Can use uridine, adenosine, guanosine, cytidine, thymidine, inosine and xanthosine as substrates. Also catalyzes the reverse reactions. The protein is Pyrimidine/purine nucleoside phosphorylase of Shewanella sp. (strain W3-18-1).